We begin with the raw amino-acid sequence, 469 residues long: Glutamate--tRNA ligase (469 aa).

The 'HIGH' region motif lies at 10–20 (PSPTGYLHVGG). Residues Cys-99, Cys-101, Cys-126, and Asp-128 each contribute to the Zn(2+) site. Residues 238–242 (RLSKR) carry the 'KMSKS' region motif. Lys-241 provides a ligand contact to ATP.

The protein belongs to the class-I aminoacyl-tRNA synthetase family. Glutamate--tRNA ligase type 1 subfamily. As to quaternary structure, monomer. The cofactor is Zn(2+).

Its subcellular location is the cytoplasm. It carries out the reaction tRNA(Glu) + L-glutamate + ATP = L-glutamyl-tRNA(Glu) + AMP + diphosphate. In terms of biological role, catalyzes the attachment of glutamate to tRNA(Glu) in a two-step reaction: glutamate is first activated by ATP to form Glu-AMP and then transferred to the acceptor end of tRNA(Glu). The polypeptide is Glutamate--tRNA ligase (Pelobacter propionicus (strain DSM 2379 / NBRC 103807 / OttBd1)).